The following is a 320-amino-acid chain: Polyketide transferase FFUJ_12241 (320 aa).

The interval Arg-58–Trp-298 is abhydrolase domain.

The protein belongs to the polyketide transferase af380 family.

Its function is as follows. Polyketide transferase; part of the gene cluster that mediates the biosynthesis of fujikurins A-D, secondary metabolites playing a role during rice infection. The polyketide synthase PKS19 acts with the trans-enoyl reductase FFUJ_12240 and the polyketide transferase FFUJ_12241 to produce fujikurins, however, the biosynthesis pathway has not been identified yet. This Gibberella fujikuroi (strain CBS 195.34 / IMI 58289 / NRRL A-6831) (Bakanae and foot rot disease fungus) protein is Polyketide transferase FFUJ_12241.